Here is a 404-residue protein sequence, read N- to C-terminus: Tryptophan synthase beta chain (404 aa).

K94 bears the N6-(pyridoxal phosphate)lysine mark.

The protein belongs to the TrpB family. As to quaternary structure, tetramer of two alpha and two beta chains. Requires pyridoxal 5'-phosphate as cofactor.

It catalyses the reaction (1S,2R)-1-C-(indol-3-yl)glycerol 3-phosphate + L-serine = D-glyceraldehyde 3-phosphate + L-tryptophan + H2O. The protein operates within amino-acid biosynthesis; L-tryptophan biosynthesis; L-tryptophan from chorismate: step 5/5. Its function is as follows. The beta subunit is responsible for the synthesis of L-tryptophan from indole and L-serine. In Staphylococcus saprophyticus subsp. saprophyticus (strain ATCC 15305 / DSM 20229 / NCIMB 8711 / NCTC 7292 / S-41), this protein is Tryptophan synthase beta chain.